The following is a 352-amino-acid chain: S-adenosylmethionine:tRNA ribosyltransferase-isomerase (352 aa).

It belongs to the QueA family. As to quaternary structure, monomer.

It is found in the cytoplasm. The catalysed reaction is 7-aminomethyl-7-carbaguanosine(34) in tRNA + S-adenosyl-L-methionine = epoxyqueuosine(34) in tRNA + adenine + L-methionine + 2 H(+). The protein operates within tRNA modification; tRNA-queuosine biosynthesis. Functionally, transfers and isomerizes the ribose moiety from AdoMet to the 7-aminomethyl group of 7-deazaguanine (preQ1-tRNA) to give epoxyqueuosine (oQ-tRNA). The sequence is that of S-adenosylmethionine:tRNA ribosyltransferase-isomerase from Dechloromonas aromatica (strain RCB).